Reading from the N-terminus, the 659-residue chain is A-type ATP synthase subunit I (659 aa).

8 helical membrane passes run 376 to 396, 415 to 435, 460 to 480, 489 to 509, 513 to 533, 542 to 562, 566 to 586, and 590 to 610; these read FFFG…VISA, IMLW…SYCG, VMAL…GFIV, AAIL…LFAL, LGIP…LFVV, MAVL…LSYA, ALAL…NMVW, and IGPI…GHIF.

Belongs to the V-ATPase 116 kDa subunit family. In terms of assembly, has multiple subunits with at least A(3), B(3), C, D, E, F, H, I and proteolipid K(x).

Its subcellular location is the cell membrane. In terms of biological role, component of the A-type ATP synthase that produces ATP from ADP in the presence of a proton gradient across the membrane. This Pyrococcus abyssi (strain GE5 / Orsay) protein is A-type ATP synthase subunit I.